Consider the following 243-residue polypeptide: Homeobox protein nob-1 (243 aa).

Over residues 1–12 (MISVMQQMINND) the composition is skewed to polar residues. Disordered regions lie at residues 1 to 23 (MISV…SITS) and 40 to 67 (SIQG…TGMV). The segment at residues 162-221 (GKKKRQPYKKDQISRLEYEYSVNQYLTNKRRSELSAQLMLDEKQVKVWFQNRRMKDKKLR) is a DNA-binding region (homeobox).

The protein belongs to the abd-b homeobox family. Interacts with nuclear receptor nhr-25. Interacts with geminin homolog gmn-1. Interacts with homeodomain protein ceh-20.

Its subcellular location is the nucleus. Transcription factor, involved in posterior embryonic patterning, morphogenetic movements of the posterior hypodermis, and cell fate specification. Binds to the 5'-TAGT-3' motif in regulatory elements of genes, including Meis protein psa-3 and microRNA mir-57. Involved in a negative regulatory loop with mir-57 to specify posterior cell identities. Required for asymmetric division of the T hypodermal cell, acting via the regulation of asymmetric expression of psa-3 in cooperation with ceh-20 and the Wnt-MAPK pathway. Involved in the regulation of the onset of non-apoptotic cell death in the linker cell, acting together with the Wnt signaling pathway. Involved in promoting embryogenesis, in concert with orphan nuclear receptor nhr-25. May regulate expression of transcription factor dmd-3. This is Homeobox protein nob-1 from Caenorhabditis elegans.